The chain runs to 358 residues: UDP-N-acetylglucosamine--N-acetylmuramyl-(pentapeptide) pyrophosphoryl-undecaprenol N-acetylglucosamine transferase (358 aa).

Residues 13-15 (TAG), Arg-166, Ser-196, and Gln-291 contribute to the UDP-N-acetyl-alpha-D-glucosamine site.

The protein belongs to the glycosyltransferase 28 family. MurG subfamily.

It localises to the cell membrane. It catalyses the reaction di-trans,octa-cis-undecaprenyl diphospho-N-acetyl-alpha-D-muramoyl-L-alanyl-D-glutamyl-meso-2,6-diaminopimeloyl-D-alanyl-D-alanine + UDP-N-acetyl-alpha-D-glucosamine = di-trans,octa-cis-undecaprenyl diphospho-[N-acetyl-alpha-D-glucosaminyl-(1-&gt;4)]-N-acetyl-alpha-D-muramoyl-L-alanyl-D-glutamyl-meso-2,6-diaminopimeloyl-D-alanyl-D-alanine + UDP + H(+). It functions in the pathway cell wall biogenesis; peptidoglycan biosynthesis. Cell wall formation. Catalyzes the transfer of a GlcNAc subunit on undecaprenyl-pyrophosphoryl-MurNAc-pentapeptide (lipid intermediate I) to form undecaprenyl-pyrophosphoryl-MurNAc-(pentapeptide)GlcNAc (lipid intermediate II). This chain is UDP-N-acetylglucosamine--N-acetylmuramyl-(pentapeptide) pyrophosphoryl-undecaprenol N-acetylglucosamine transferase, found in Clostridium botulinum (strain Alaska E43 / Type E3).